A 473-amino-acid polypeptide reads, in one-letter code: MKTLYSLRRFYPVETLFNGTLAXAGRDQETTGFAWWAGNARLINLSGKLLGAHVAHAGLIVFWAGAMNLFEVAHFVPEKPMYEQGLILLPHLATLGWGVGPGGEVIDTFPYFVSGVLHLISSAVLGFGGIYHALLGPETLEESFPFFGYVWKDRNKMTTILGIHLILLGIGAFLLVFKALYFGGVYDTWAPGGGDVRKITNLTLSPSVIFGYLLKSPFGGEGWIVSVDDLEDIIGGHVWLGSICILGGIWHILTKPFAWARRALVWSGEAYLSYSLAALSVFGFIACCFVWFNNTAYPSEFYGPTGPEASQAQAFTFLVRDQRLGANVGSAQGPTGLGKYLMRSPTGEVIFGGETMRFWDLRAPWLEPLRGPNGLDLSRLKKDIQPWQERRSAEYMTHAPLGSLNSVGGVATEINAVNYVSPRSWLATSHFVLGFFLFVGHLWHAGRARAAAAGFEKGIDRDFEPVLSMTPLN.

Positions 1-14 are excised as a propeptide; that stretch reads MKTLYSLRRFYPVE. Thr15 is subject to N-acetylthreonine. Position 15 is a phosphothreonine (Thr15). 5 consecutive transmembrane segments (helical) span residues 69–93, 134–155, 178–200, 255–275, and 291–312; these read LFEVAHFVPEKPMYEQGLILLPHLA, LLGPETLEESFPFFGYVWKDRN, KALYFGGVYDTWAPGGGDVRKIT, KPFAWARRALVWSGEAYLSYS, and WFNNTAYPSEFYGPTGPEASQA. Glu367 lines the [CaMn4O5] cluster pocket. Residues 447–471 form a helical membrane-spanning segment; the sequence is RARAAAAGFEKGIDRDFEPVLSMTP.

It belongs to the PsbB/PsbC family. PsbC subfamily. As to quaternary structure, PSII is composed of 1 copy each of membrane proteins PsbA, PsbB, PsbC, PsbD, PsbE, PsbF, PsbH, PsbI, PsbJ, PsbK, PsbL, PsbM, PsbT, PsbX, PsbY, PsbZ, Psb30/Ycf12, at least 3 peripheral proteins of the oxygen-evolving complex and a large number of cofactors. It forms dimeric complexes. Requires Binds multiple chlorophylls and provides some of the ligands for the Ca-4Mn-5O cluster of the oxygen-evolving complex. It may also provide a ligand for a Cl- that is required for oxygen evolution. PSII binds additional chlorophylls, carotenoids and specific lipids. as cofactor.

The protein resides in the plastid. It localises to the chloroplast thylakoid membrane. Functionally, one of the components of the core complex of photosystem II (PSII). It binds chlorophyll and helps catalyze the primary light-induced photochemical processes of PSII. PSII is a light-driven water:plastoquinone oxidoreductase, using light energy to abstract electrons from H(2)O, generating O(2) and a proton gradient subsequently used for ATP formation. This is Photosystem II CP43 reaction center protein from Eucalyptus globulus subsp. globulus (Tasmanian blue gum).